The sequence spans 161 residues: DNA-directed RNA polymerase 18 kDa subunit (161 aa).

It belongs to the poxviridae DNA-directed RNA polymerase 18 kDa subunit family. The DNA-dependent RNA polymerase used for intermediate and late genes expression consists of eight subunits 147 kDa, 133 kDa, 35 kDa, 30 kDa, 22 kDa, 19 kDa, 18 kDa and 7 kDa totalling more than 500 kDa in mass. The same holoenzyme, with the addition of the transcription-specificity factor RAP94, is used for early gene expression.

It localises to the virion. The enzyme catalyses RNA(n) + a ribonucleoside 5'-triphosphate = RNA(n+1) + diphosphate. Part of the DNA-dependent RNA polymerase which catalyzes the transcription of viral DNA into RNA using the four ribonucleoside triphosphates as substrates. Responsible for the transcription of early, intermediate and late genes. DNA-dependent RNA polymerase associates with the early transcription factor (ETF) thereby allowing the early genes transcription. Late transcription, and probably also intermediate transcription, require newly synthesized RNA polymerase. In Vertebrata (FPV), this protein is DNA-directed RNA polymerase 18 kDa subunit (RPO18).